The chain runs to 205 residues: Probable thymidylate kinase (205 aa).

10–17 is an ATP binding site; it reads GIDGSGKS.

The protein belongs to the thymidylate kinase family.

It carries out the reaction dTMP + ATP = dTDP + ADP. In Methanosarcina barkeri (strain Fusaro / DSM 804), this protein is Probable thymidylate kinase.